A 534-amino-acid chain; its full sequence is GMP synthase [glutamine-hydrolyzing] (534 aa).

One can recognise a Glutamine amidotransferase type-1 domain in the interval 4–202 (KILILDFGSQ…VLEIAKAQPD (199 aa)). C81 (nucleophile) is an active-site residue. Residues H176 and E178 contribute to the active site. In terms of domain architecture, GMPS ATP-PPase spans 203–402 (WVMKDHVAEA…LGLPHDMVYR (200 aa)). Residue 230–236 (SGGVDSS) participates in ATP binding.

Homodimer.

It catalyses the reaction XMP + L-glutamine + ATP + H2O = GMP + L-glutamate + AMP + diphosphate + 2 H(+). It functions in the pathway purine metabolism; GMP biosynthesis; GMP from XMP (L-Gln route): step 1/1. Catalyzes the synthesis of GMP from XMP. The protein is GMP synthase [glutamine-hydrolyzing] of Methylibium petroleiphilum (strain ATCC BAA-1232 / LMG 22953 / PM1).